A 680-amino-acid chain; its full sequence is DNA-directed RNA polymerase subunit beta' (680 aa).

Residues C69, C71, C87, and C90 each coordinate Zn(2+). Residues D489, D491, and D493 each contribute to the Mg(2+) site.

Belongs to the RNA polymerase beta' chain family. RpoC1 subfamily. In terms of assembly, in plastids the minimal PEP RNA polymerase catalytic core is composed of four subunits: alpha, beta, beta', and beta''. When a (nuclear-encoded) sigma factor is associated with the core the holoenzyme is formed, which can initiate transcription. Requires Mg(2+) as cofactor. It depends on Zn(2+) as a cofactor.

It is found in the plastid. Its subcellular location is the chloroplast. It catalyses the reaction RNA(n) + a ribonucleoside 5'-triphosphate = RNA(n+1) + diphosphate. Its function is as follows. DNA-dependent RNA polymerase catalyzes the transcription of DNA into RNA using the four ribonucleoside triphosphates as substrates. The sequence is that of DNA-directed RNA polymerase subunit beta' from Draba nemorosa (Woodland whitlowgrass).